The chain runs to 678 residues: DNA ligase (678 aa).

Residues 47–51 (DSDYD), 96–97 (SL), and Glu-122 each bind NAD(+). Catalysis depends on Lys-124, which acts as the N6-AMP-lysine intermediate. The NAD(+) site is built by Arg-145, Glu-182, Lys-300, and Lys-324. Residues Cys-418, Cys-421, Cys-436, and Cys-442 each contribute to the Zn(2+) site. Positions 602–678 (AYNESFTGKT…ILEDNLKDLL (77 aa)) constitute a BRCT domain.

The protein belongs to the NAD-dependent DNA ligase family. LigA subfamily. Mg(2+) is required as a cofactor. Requires Mn(2+) as cofactor.

It carries out the reaction NAD(+) + (deoxyribonucleotide)n-3'-hydroxyl + 5'-phospho-(deoxyribonucleotide)m = (deoxyribonucleotide)n+m + AMP + beta-nicotinamide D-nucleotide.. Functionally, DNA ligase that catalyzes the formation of phosphodiester linkages between 5'-phosphoryl and 3'-hydroxyl groups in double-stranded DNA using NAD as a coenzyme and as the energy source for the reaction. It is essential for DNA replication and repair of damaged DNA. This chain is DNA ligase, found in Francisella tularensis subsp. holarctica (strain OSU18).